A 657-amino-acid chain; its full sequence is MSASSSGGSPRFPSCGKNGVTSLTQKKVLRTPCGAPSVTVTKSHKRGMKGDTVNVRRSVRVKTKVPWMPPGKSSARHVGCNWENPPHCLEITPPSSEKLVSVMRLSDLSTEDDDSGHCKMNRYDKKIDSLMNAVGCLKSEVKMQKGERQMAKRFLEERKEELEEVAQELAETEHENTVLRHNIERIKEEKDYTMLQKKHLQQEKECLMSKLVEAEMDGAAAAKQVMALKDTIGKLKSEKQMTCSDINTLTRQKELLLQKLSTFEETNRTLRDLLREQHCKEDSERLMEQQGTLLKRLAEADSEKARLLLLLQDKDKEVEELLQEIQCEKAQAKTASELSKSMETMRGHLQAQLRCKEAENSRLCMQIKNLERSGNQHKAEVEAIMEQLKELKQKGERDKESLKKAIRAQKERAEKSEEYAEQLHVQLADKDLYVAEALSTLESWRSRYNQVVKDKGDLELEIIVLNDRVTDLVNQQQTLEEKMREDRDSLVERLHRQTAEYSAFKLENERLKASFAPMEDKLNQAHIEVQQLKASVKNYEGMIDNYKSQVMKTRLEADEVAAQLERCDKENKILKDEMNKEIEAARRQFQSQLADLQQLPDILKITEAKLAECQDQLQGYERKNIDLTAIISDLRSRVRDWQKGSHELARAGARLPR.

Phosphoserine is present on residues S73 and S74. T92 is subject to Phosphothreonine. S95 carries the phosphoserine; by TSSK4 modification. 2 positions are modified to phosphoserine: S106 and S109. The residue at position 110 (T110) is a Phosphothreonine. S115 and S129 each carry phosphoserine. A Glycyl lysine isopeptide (Lys-Gly) (interchain with G-Cter in SUMO2) cross-link involves residue K138. S139 bears the Phosphoserine mark. Coiled-coil stretches lie at residues 144–423 (QKGE…AEQL) and 461–635 (EIIV…SDLR). Residue T231 is modified to Phosphothreonine. Phosphoserine is present on residues S261 and S632.

The protein belongs to the ODF2 family. As to quaternary structure, self-associates. Associates with microtubules and forms a fibrillar structure partially linked to the microtubule network. Interacts via its C-terminus with PLK1. Interacts with ODF1. Interacts with MARK4; the interaction is required for localization of ODF2 to centrioles. Interacts with TSSK4. Interacts with AKNA. Interacts with CFAP58. Interacts with BBOF1. Interacts with CCDC38. Interacts with CCDC42. Post-translationally, tyrosine phosphorylated. Phosphorylated on Ser-95 by TSSK4.

It localises to the cytoplasm. It is found in the cytoskeleton. Its subcellular location is the microtubule organizing center. The protein localises to the centrosome. The protein resides in the cell projection. It localises to the cilium. It is found in the centriole. Its subcellular location is the spindle pole. The protein localises to the flagellum. In terms of biological role, seems to be a major component of sperm tail outer dense fibers (ODF). ODFs are filamentous structures located on the outside of the axoneme in the midpiece and principal piece of the mammalian sperm tail and may help to maintain the passive elastic structures and elastic recoil of the sperm tail. May have a modulating influence on sperm motility. Functions as a general scaffold protein that is specifically localized at the distal/subdistal appendages of mother centrioles. Component of the centrosome matrix required for the localization of PLK1 and NIN to the centrosomes. Required for the formation and/or maintenance of normal CETN1 assembly. This Bos taurus (Bovine) protein is Outer dense fiber protein 2 (ODF2).